A 348-amino-acid polypeptide reads, in one-letter code: 5-deoxyribose 1-phosphate isomerase (348 aa).

Substrate contacts are provided by residues 49–51, arginine 92, and glutamine 199; that span reads RGA. The Proton donor role is filled by aspartate 240. 250–251 is a binding site for substrate; the sequence is NK.

The protein belongs to the EIF-2B alpha/beta/delta subunits family. DrdI subfamily. In terms of assembly, homodimer.

The enzyme catalyses 5-deoxy-alpha-D-ribose 1-phosphate = 5-deoxy-D-ribulose 1-phosphate. It catalyses the reaction 5-(methylsulfanyl)-alpha-D-ribose 1-phosphate = 5-(methylsulfanyl)-D-ribulose 1-phosphate. It functions in the pathway carbohydrate degradation. Catalyzes the isomerization of 5-deoxy-alpha-D-ribose 1-phosphate to 5-deoxy-D-ribulose 1-phosphate, as part of a 5-deoxyribose salvage pathway that recycles this toxic radical SAM enzyme by-product to mainstream metabolites. Also seems to be able to catalyze the conversion of methylthioribose-1-phosphate (MTR-1-P) into methylthioribulose-1-phosphate (MTRu-1-P). However this enzyme may not function in methionine salvage in B.thuringiensis since it exists a paralog (MtnA) present in the methionine salvage pathway cluster. The protein is 5-deoxyribose 1-phosphate isomerase of Bacillus thuringiensis serovar kurstaki (strain ATCC 35866 / NRRL B-4488 / HD73).